A 356-amino-acid chain; its full sequence is NADH dehydrogenase (ubiquinone) complex I, assembly factor 6 homolog (356 aa).

The N-terminal 41 residues, 1–41 (MIRNSGRILFNSLKNSNVKLINRNVIINSNIRLFSTSTNNT), are a transit peptide targeting the mitochondrion.

The protein belongs to the NDUFAF6 family.

It localises to the mitochondrion inner membrane. Involved in the assembly of mitochondrial NADH:ubiquinone oxidoreductase complex (complex I) at early stages. The chain is NADH dehydrogenase (ubiquinone) complex I, assembly factor 6 homolog from Dictyostelium discoideum (Social amoeba).